The primary structure comprises 238 residues: Ribosomal RNA small subunit methyltransferase G (238 aa).

S-adenosyl-L-methionine-binding positions include Gly-77, Phe-82, 128–129 (AE), and Arg-147.

It belongs to the methyltransferase superfamily. RNA methyltransferase RsmG family.

The protein localises to the cytoplasm. Functionally, specifically methylates the N7 position of guanine in position 535 of 16S rRNA. This is Ribosomal RNA small subunit methyltransferase G from Listeria welshimeri serovar 6b (strain ATCC 35897 / DSM 20650 / CCUG 15529 / CIP 8149 / NCTC 11857 / SLCC 5334 / V8).